Reading from the N-terminus, the 250-residue chain is 5'-nucleotidase SurE (250 aa).

Positions 8, 9, 40, and 92 each coordinate a divalent metal cation.

Belongs to the SurE nucleotidase family. The cofactor is a divalent metal cation.

The protein localises to the cytoplasm. The catalysed reaction is a ribonucleoside 5'-phosphate + H2O = a ribonucleoside + phosphate. In terms of biological role, nucleotidase that shows phosphatase activity on nucleoside 5'-monophosphates. The sequence is that of 5'-nucleotidase SurE from Dichelobacter nodosus (strain VCS1703A).